Reading from the N-terminus, the 106-residue chain is UPF0145 protein Pfl01_1745 (106 aa).

It belongs to the UPF0145 family.

This Pseudomonas fluorescens (strain Pf0-1) protein is UPF0145 protein Pfl01_1745.